Reading from the N-terminus, the 195-residue chain is 3-isopropylmalate dehydratase small subunit (195 aa).

This sequence belongs to the LeuD family. LeuD type 1 subfamily. As to quaternary structure, heterodimer of LeuC and LeuD.

The enzyme catalyses (2R,3S)-3-isopropylmalate = (2S)-2-isopropylmalate. Its pathway is amino-acid biosynthesis; L-leucine biosynthesis; L-leucine from 3-methyl-2-oxobutanoate: step 2/4. Its function is as follows. Catalyzes the isomerization between 2-isopropylmalate and 3-isopropylmalate, via the formation of 2-isopropylmaleate. This Salinispora tropica (strain ATCC BAA-916 / DSM 44818 / JCM 13857 / NBRC 105044 / CNB-440) protein is 3-isopropylmalate dehydratase small subunit.